An 89-amino-acid polypeptide reads, in one-letter code: Gibberellin-regulated protein 10 (89 aa).

Positions 1–25 are cleaved as a signal peptide; that stretch reads MKFPAVKVLIISLLITSSLFILSTA.

The protein belongs to the GASA family. Post-translationally, six disulfide bonds may be present. As to expression, expressed in vasculature of rosette leaves and roots, cotyledon and root tips and developing seeds.

It is found in the secreted. Functionally, gibberellin-regulated protein that may function in hormonal controlled steps of development such as seed germination, flowering and seed maturation. The chain is Gibberellin-regulated protein 10 (GASA10) from Arabidopsis thaliana (Mouse-ear cress).